Reading from the N-terminus, the 66-residue chain is Large ribosomal subunit protein bL33B (66 aa).

The protein belongs to the bacterial ribosomal protein bL33 family.

The sequence is that of Large ribosomal subunit protein bL33B from Synechococcus sp. (strain CC9605).